Consider the following 32-residue polypeptide: Cytochrome b6-f complex subunit 7 (32 aa).

Residues 5-25 (IFGTAAIFWVLIPAGLLGGAL) form a helical membrane-spanning segment.

Belongs to the PetM family. In terms of assembly, the 4 large subunits of the cytochrome b6-f complex are cytochrome b6, subunit IV (17 kDa polypeptide, PetD), cytochrome f and the Rieske protein, while the 4 small subunits are PetG, PetL, PetM and PetN. The complex functions as a dimer.

The protein resides in the cellular thylakoid membrane. Its function is as follows. Component of the cytochrome b6-f complex, which mediates electron transfer between photosystem II (PSII) and photosystem I (PSI), cyclic electron flow around PSI, and state transitions. This is Cytochrome b6-f complex subunit 7 from Prochlorococcus marinus (strain SARG / CCMP1375 / SS120).